A 146-amino-acid chain; its full sequence is SsrA-binding protein (146 aa).

Basic and acidic residues predominate over residues 127–139; it reads KRQTIKDRDNSRE. Positions 127–146 are disordered; the sequence is KRQTIKDRDNSREARKHIRV.

Belongs to the SmpB family.

It is found in the cytoplasm. In terms of biological role, required for rescue of stalled ribosomes mediated by trans-translation. Binds to transfer-messenger RNA (tmRNA), required for stable association of tmRNA with ribosomes. tmRNA and SmpB together mimic tRNA shape, replacing the anticodon stem-loop with SmpB. tmRNA is encoded by the ssrA gene; the 2 termini fold to resemble tRNA(Ala) and it encodes a 'tag peptide', a short internal open reading frame. During trans-translation Ala-aminoacylated tmRNA acts like a tRNA, entering the A-site of stalled ribosomes, displacing the stalled mRNA. The ribosome then switches to translate the ORF on the tmRNA; the nascent peptide is terminated with the 'tag peptide' encoded by the tmRNA and targeted for degradation. The ribosome is freed to recommence translation, which seems to be the essential function of trans-translation. This chain is SsrA-binding protein, found in Malacoplasma penetrans (strain HF-2) (Mycoplasma penetrans).